The sequence spans 397 residues: Nuclear RNA export factor 5 (397 aa).

The RRM domain occupies 13–92 (WFKVTIPYGI…IFVSHFTAPY (80 aa)). 4 LRR repeats span residues 160 to 185 (ELLSLNLCNNKLYQLDGLSDITEKAP), 186 to 209 (KVKTLNLSKNKLESAWELGKVKGL), 210 to 237 (KLEELWLEGNPLCSTFSDQSAYVSAIRD), and 238 to 265 (CFPKLLRLDGRELSAPVIVDIDSSETMK). In terms of domain architecture, NTF2; truncated spans 280–367 (LVLQFLQQSN…ESQRWWCLLS (88 aa)).

This sequence belongs to the NXF family. In terms of assembly, interacts with NXT1 and NXT2.

It is found in the cytoplasm. Its subcellular location is the nucleus. Functionally, could be involved in the export of mRNA from the nucleus to the cytoplasm. Could also have a role in polarized cytoplasmic transport and localization of mRNA in neurons. This chain is Nuclear RNA export factor 5 (NXF5), found in Homo sapiens (Human).